A 145-amino-acid chain; its full sequence is Large ribosomal subunit protein uL11 (145 aa).

The protein belongs to the universal ribosomal protein uL11 family. Part of the ribosomal stalk of the 50S ribosomal subunit. Interacts with L10 and the large rRNA to form the base of the stalk. L10 forms an elongated spine to which L12 dimers bind in a sequential fashion forming a multimeric L10(L12)X complex. One or more lysine residues are methylated.

Forms part of the ribosomal stalk which helps the ribosome interact with GTP-bound translation factors. The chain is Large ribosomal subunit protein uL11 from Rickettsia africae (strain ESF-5).